Here is a 187-residue protein sequence, read N- to C-terminus: MASTADFKNGLVLQIDGQLWQIVEFQHVKPGKGPAFVRTKLKNVVSGKVVDKTYNAGVKVETATVDRRDATYLYRDGSDFVFMDSEDYEQHPLPESLVGRAADFLLESMPVQIAFHDGVPLYLELPVTVELLVASTEPGLQGDRSSAGTKPATMETGAEIQVPLFINTGDKLKVDSRDGSYLGRVNA.

The protein belongs to the elongation factor P family.

It is found in the cytoplasm. It functions in the pathway protein biosynthesis; polypeptide chain elongation. Involved in peptide bond synthesis. Stimulates efficient translation and peptide-bond synthesis on native or reconstituted 70S ribosomes in vitro. Probably functions indirectly by altering the affinity of the ribosome for aminoacyl-tRNA, thus increasing their reactivity as acceptors for peptidyl transferase. The protein is Elongation factor P of Mycobacterium sp. (strain JLS).